Consider the following 234-residue polypeptide: ATP-dependent dethiobiotin synthetase BioD (234 aa).

14 to 19 is an ATP binding site; that stretch reads GVGKTI. A Mg(2+)-binding site is contributed by T18. K39 is an active-site residue. S43 is a substrate binding site. Residues D56, 118–121, 178–179, and 208–210 contribute to the ATP site; these read EGAG, NH, and PWL. Mg(2+) is bound by residues D56 and E118.

This sequence belongs to the dethiobiotin synthetase family. In terms of assembly, homodimer. Mg(2+) serves as cofactor.

The protein localises to the cytoplasm. It carries out the reaction (7R,8S)-7,8-diammoniononanoate + CO2 + ATP = (4R,5S)-dethiobiotin + ADP + phosphate + 3 H(+). It functions in the pathway cofactor biosynthesis; biotin biosynthesis; biotin from 7,8-diaminononanoate: step 1/2. In terms of biological role, catalyzes a mechanistically unusual reaction, the ATP-dependent insertion of CO2 between the N7 and N8 nitrogen atoms of 7,8-diaminopelargonic acid (DAPA, also called 7,8-diammoniononanoate) to form a ureido ring. The polypeptide is ATP-dependent dethiobiotin synthetase BioD (Marinobacter nauticus (strain ATCC 700491 / DSM 11845 / VT8) (Marinobacter aquaeolei)).